Reading from the N-terminus, the 122-residue chain is Large ribosomal subunit protein uL14 (122 aa).

The protein belongs to the universal ribosomal protein uL14 family. In terms of assembly, part of the 50S ribosomal subunit. Forms a cluster with proteins L3 and L19. In the 70S ribosome, L14 and L19 interact and together make contacts with the 16S rRNA in bridges B5 and B8.

Functionally, binds to 23S rRNA. Forms part of two intersubunit bridges in the 70S ribosome. The polypeptide is Large ribosomal subunit protein uL14 (Borreliella afzelii (strain PKo) (Borrelia afzelii)).